The sequence spans 149 residues: UPF0178 protein VV1_1847 (149 aa).

It belongs to the UPF0178 family.

The polypeptide is UPF0178 protein VV1_1847 (Vibrio vulnificus (strain CMCP6)).